The primary structure comprises 366 residues: Small ribosomal subunit biogenesis GTPase RsgA (366 aa).

In terms of domain architecture, CP-type G spans Arg107 to Val266. Residues Thr154–Asp157 and Gly208–Thr216 contribute to the GTP site. Zn(2+) is bound by residues Cys289, Cys294, His296, and Cys302.

The protein belongs to the TRAFAC class YlqF/YawG GTPase family. RsgA subfamily. As to quaternary structure, monomer. Associates with 30S ribosomal subunit, binds 16S rRNA. The cofactor is Zn(2+).

It localises to the cytoplasm. In terms of biological role, one of several proteins that assist in the late maturation steps of the functional core of the 30S ribosomal subunit. Helps release RbfA from mature subunits. May play a role in the assembly of ribosomal proteins into the subunit. Circularly permuted GTPase that catalyzes slow GTP hydrolysis, GTPase activity is stimulated by the 30S ribosomal subunit. This Streptomyces coelicolor (strain ATCC BAA-471 / A3(2) / M145) protein is Small ribosomal subunit biogenesis GTPase RsgA.